A 423-amino-acid chain; its full sequence is FAD-dependent monooxygenase asL6 (423 aa).

Residues 10–13, 34–35, Arg108, Tyr290, and Asp312 each bind FAD; these read AGVA and ER. Residues 371–391 form a helical membrane-spanning segment; it reads GMGMFQSKFGVGVFYVLLAII.

The protein belongs to the aromatic-ring hydroxylase family. FAD is required as a cofactor.

The protein localises to the membrane. The protein operates within secondary metabolite biosynthesis; terpenoid biosynthesis. Its function is as follows. FAD-dependent monooxygenase; part of the gene cluster that mediates the biosynthesis of xenovulene A, an unusual meroterpenoid that has potent inhibitory effects on the human gamma-aminobutyrate A (GABAA) benzodiazepine receptor. The first step of xenovulene A biosynthesis is the biosynthesis of 3-methylorcinaldehyde performed by the non-reducing polyketide synthase aspks1. The salicylate hydroxylase asL1 then catalyzes the oxidative dearomatization of 3-methylorcinaldehyde to yield a dearomatized hydroxycyclohexadione. The 2-oxoglutarate-dependent dioxygenase asL3 further catalyzes the oxidative ring expansion to provide the first tropolone metabolite. The cytochrome P450 monooxygenase asR2 allows the synthesis of tropolone hemiacetal. In parallel, a previously unrecognised class of terpene cyclase, asR6, produces alpha-humulene from farnesylpyrophosphate (FPP). The putative Diels-Alderase asR5 probably catalyzes the formation of the tropolone-humulene skeleton by linking humulene and the polyketide moiety. Oxidative-ring contractions catalyzed by asL4 and asL6 then processively remove carbon atoms from the polyketide to yield xenovulene A. This chain is FAD-dependent monooxygenase asL6, found in Sarocladium schorii (Acremonium strictum (strain IMI 501407)).